The sequence spans 434 residues: Eukaryotic translation initiation factor 3 subunit E (434 aa).

In terms of domain architecture, PCI spans 219–392 (FFNHPKGRDL…GHVVMGTQPL (174 aa)).

Belongs to the eIF-3 subunit E family. In terms of assembly, component of the eukaryotic translation initiation factor 3 (eIF-3) complex. The eIF-3 complex interacts with pix. Interacts with mxt.

The protein resides in the cytoplasm. Functionally, component of the eukaryotic translation initiation factor 3 (eIF-3) complex, which is involved in protein synthesis of a specialized repertoire of mRNAs and, together with other initiation factors, stimulates binding of mRNA and methionyl-tRNAi to the 40S ribosome. The eIF-3 complex specifically targets and initiates translation of a subset of mRNAs involved in cell proliferation. This Drosophila ananassae (Fruit fly) protein is Eukaryotic translation initiation factor 3 subunit E (eIF3-S6).